Here is a 168-residue protein sequence, read N- to C-terminus: Peptide deformylase (168 aa).

2 residues coordinate Fe cation: Cys91 and His133. Residue Glu134 is part of the active site. His137 contacts Fe cation.

This sequence belongs to the polypeptide deformylase family. Fe(2+) serves as cofactor.

It catalyses the reaction N-terminal N-formyl-L-methionyl-[peptide] + H2O = N-terminal L-methionyl-[peptide] + formate. Its function is as follows. Removes the formyl group from the N-terminal Met of newly synthesized proteins. Requires at least a dipeptide for an efficient rate of reaction. N-terminal L-methionine is a prerequisite for activity but the enzyme has broad specificity at other positions. The polypeptide is Peptide deformylase (Endomicrobium trichonymphae).